The chain runs to 139 residues: Lymphocyte antigen 6H (139 aa).

The first 25 residues, Met-1–Gly-25, serve as a signal peptide directing secretion. Positions Leu-26–Ser-113 constitute a UPAR/Ly6 domain. 5 disulfide bridges follow: Cys-28/Cys-51, Cys-31/Cys-39, Cys-44/Cys-72, Cys-76/Cys-103, and Cys-104/Cys-109. Asn-35 is a glycosylation site (N-linked (GlcNAc...) asparagine). Asn-110 carries GPI-anchor amidated asparagine lipidation. A propeptide spans Gly-111 to Pro-139 (removed in mature form).

In terms of assembly, interacts with CHRNA4 and CHRNA7. Strongly expressed in brain, also found in lower levels in eye and reproductive tissues.

Its subcellular location is the cell membrane. Believed to act as modulator of nicotinic acetylcholine receptors (nAChRs) activity. In vitro inhibits alpha-3:beta-4-containing nAChRs maximum response. In vitro inhibits alpha-3:beta-4-containing nAChRs maximum response. May play a role in the intracellular trafficking of alpha-7-containing nAChRs and may inhibit their expression at the cell surface. Seems to inhibit alpha-7/CHRNA7 signaling in hippocampal neurons. This is Lymphocyte antigen 6H (Ly6h) from Mus musculus (Mouse).